Consider the following 307-residue polypeptide: Ribosomal protein uL3 glutamine methyltransferase (307 aa).

Belongs to the protein N5-glutamine methyltransferase family. PrmB subfamily.

It carries out the reaction L-glutaminyl-[ribosomal protein uL3] + S-adenosyl-L-methionine = N(5)-methyl-L-glutaminyl-[ribosomal protein uL3] + S-adenosyl-L-homocysteine + H(+). Its function is as follows. Methylates large ribosomal subunit protein uL3 on a specific glutamine residue. The chain is Ribosomal protein uL3 glutamine methyltransferase from Burkholderia pseudomallei (strain K96243).